Here is a 462-residue protein sequence, read N- to C-terminus: EPD1-interacting receptor-like cytoplasmic serine/threonine-protein kinase 5A (462 aa).

A Protein kinase domain is found at 85–366 (FSSANFLGEG…DVVNILEPLL (282 aa)). Residues 91–99 (LGEGGFGPV) and lysine 120 each bind ATP. Phosphotyrosine is present on residues tyrosine 165 and tyrosine 167. Aspartate 215 acts as the Proton acceptor in catalysis.

This sequence belongs to the protein kinase superfamily. Ser/Thr protein kinase family. Interacts with the Verticillium dahliae elicitor EPD1 (AC G2WWH6). Post-translationally, phosphorylated at Tyr-165 and Tyr-167 in the presence of pathogen-associated molecular patterns (PAMPs); this triggers the expression of pathogenesis-related genes (e.g. PR5 and PR16). Mostly expressed in roots and, to a lesser extent, in leaves.

The protein resides in the cell membrane. The enzyme catalyses L-seryl-[protein] + ATP = O-phospho-L-seryl-[protein] + ADP + H(+). It catalyses the reaction L-threonyl-[protein] + ATP = O-phospho-L-threonyl-[protein] + ADP + H(+). In terms of biological role, required for pathogen-associated molecular pattern (PAMP, e.g. chitin and flg22)-triggered immunity (PTI) involving reactive oxygen species (ROS) accumulation and triggering plant defense, including defense-related gene expression (e.g. PR1 and LOX). Ensures specific recognition of the EPD1 effector of Verticillium dahliae, resulting in a hypersensitive response known as effector-triggered immunity (ETI), characterized by the activation of programmed cell death to limit infection by the pathogen. Priming plants with the incompatible pathogen V.dahliae leads to an increased resistance to compatible pathogens, as a result of systemic acquired resistance (SAR). In Gossypium barbadense (Sea Island cotton), this protein is EPD1-interacting receptor-like cytoplasmic serine/threonine-protein kinase 5A.